The chain runs to 428 residues: 3-phosphoshikimate 1-carboxyvinyltransferase (428 aa).

3 residues coordinate 3-phosphoshikimate: lysine 19, serine 20, and arginine 24. Lysine 19 serves as a coordination point for phosphoenolpyruvate. Phosphoenolpyruvate is bound by residues glycine 91 and arginine 119. Positions 164, 166, 312, and 339 each coordinate 3-phosphoshikimate. Glutamine 166 serves as a coordination point for phosphoenolpyruvate. Aspartate 312 serves as the catalytic Proton acceptor. Positions 343 and 386 each coordinate phosphoenolpyruvate.

This sequence belongs to the EPSP synthase family. Monomer.

The protein localises to the cytoplasm. It catalyses the reaction 3-phosphoshikimate + phosphoenolpyruvate = 5-O-(1-carboxyvinyl)-3-phosphoshikimate + phosphate. It participates in metabolic intermediate biosynthesis; chorismate biosynthesis; chorismate from D-erythrose 4-phosphate and phosphoenolpyruvate: step 6/7. Its function is as follows. Catalyzes the transfer of the enolpyruvyl moiety of phosphoenolpyruvate (PEP) to the 5-hydroxyl of shikimate-3-phosphate (S3P) to produce enolpyruvyl shikimate-3-phosphate and inorganic phosphate. This Bacillus velezensis (strain DSM 23117 / BGSC 10A6 / LMG 26770 / FZB42) (Bacillus amyloliquefaciens subsp. plantarum) protein is 3-phosphoshikimate 1-carboxyvinyltransferase.